Here is a 213-residue protein sequence, read N- to C-terminus: Serine protease inhibitor 5 (213 aa).

The signal sequence occupies residues 1 to 22 (MKCLFLLCLCLVPIVVFSSTFT). The propeptide occupies 23-28 (SQNPIN). Residues 25–30 (NPINLP) carry the Vacuolar targeting signal motif. Cystine bridges form between Cys-76–Cys-125 and Cys-174–Cys-183.

It belongs to the protease inhibitor I3 (leguminous Kunitz-type inhibitor) family.

Its subcellular location is the vacuole. Its function is as follows. Inhibitor of trypsin (serine protease). Protects the plant by inhibiting proteases of invading organisms. The chain is Serine protease inhibitor 5 from Solanum tuberosum (Potato).